Reading from the N-terminus, the 531-residue chain is RNA-binding protein RO60 (531 aa).

The 337-residue stretch at 24 to 360 folds into the TROVE domain; sequence VRNNAGGFVY…AFGNVQPANT (337 aa). Residues 128–274 are RNA-binding; sequence RTGTMLLHFL…TNGLTWLLRN (147 aa). Residues 352-531 are VWFA-like domain; sequence FGNVQPANTR…VMTAFARGEV (180 aa). Residues Ser369, Ser371, and Thr438 each contribute to the a divalent metal cation site.

It belongs to the Ro 60 kDa family. As to quaternary structure, forms oligomers upon binding DrY RNA, The multimers are of an average size of 700 kDa and are composed of around 12 molecules of Rsr-DrY RNA.

The protein resides in the cytoplasm. In terms of biological role, binds to several small RNAs that accumulate during recovery from UV irradiation. Contributes to the resistance of D.radiodurans to ultraviolet irradiation. This is RNA-binding protein RO60 from Deinococcus radiodurans (strain ATCC 13939 / DSM 20539 / JCM 16871 / CCUG 27074 / LMG 4051 / NBRC 15346 / NCIMB 9279 / VKM B-1422 / R1).